We begin with the raw amino-acid sequence, 500 residues long: MNSHTKQKIGVFGLGKTGISVYEELQNKYDVIVYDDLKANRDIFEELYSKTAIAALSDSRWQNLDTIVLSPGIPLTHEIVNIAKSFNIPITSDIDLLFAKSKNLKFIAITGTNGKSTTTALISHILNSSGLDYPVAGNIGVSALQAKASKDGYVLELSSFQLDLVKTFTAKIAVLLNITPDHLDRHQDMTCYIAAKSKIFDRMDQESYAVINIDNDYCREVFIKLQQEQRIKLIPFSVAQILENGISVVDDKISANFCDDISFELQHNSESFRQDEFQGEPAEPECIKIREHRQDLQNSLVSSFMHYAVPFNKNLQGVHNCENIAASYAVAKIIGVEPKKILESISSFQSLPHRMQYIGSINNISFYNDSKATNAISAVQSIKALDNIYWLAGGIPKEGGIEEIKPYFSHIKKAYFYGQAKEIFANTAKNIVDFVICDNLEQAFDLAYKDAVGDNAEIKNILLAPSCSSYDQFKNFEERGELFIKLCSILSLRGLITGSS.

Residue 111–117 (GTNGKST) coordinates ATP. The region spanning 260–306 (DISFELQHNSESFRQDEFQGEPAEPECIKIREHRQDLQNSLVSSFMH) is the RPE3 insert domain.

Belongs to the MurCDEF family.

The protein localises to the cytoplasm. It carries out the reaction UDP-N-acetyl-alpha-D-muramoyl-L-alanine + D-glutamate + ATP = UDP-N-acetyl-alpha-D-muramoyl-L-alanyl-D-glutamate + ADP + phosphate + H(+). It participates in cell wall biogenesis; peptidoglycan biosynthesis. Its function is as follows. Cell wall formation. Catalyzes the addition of glutamate to the nucleotide precursor UDP-N-acetylmuramoyl-L-alanine (UMA). The protein is UDP-N-acetylmuramoylalanine--D-glutamate ligase (murD) of Rickettsia conorii (strain ATCC VR-613 / Malish 7).